The primary structure comprises 1104 residues: Nitrite reductase [NAD(P)H] (1104 aa).

Gln44 to Glu79 contacts FAD. Tyr146 to Thr176 contacts NAD(+). Positions Lys396–Pro419 are disordered. The [2Fe-2S] cluster site is built by Cys500, Cys502, Cys535, and Cys538. 4 residues coordinate [4Fe-4S] cluster: Cys720, Cys726, Cys760, and Cys764. Cys764 provides a ligand contact to siroheme. One can recognise a Rieske domain in the interval Trp932–Tyr1040. [2Fe-2S] cluster-binding residues include Cys976, His978, Cys1001, and His1004. A disordered region spans residues Gly1081 to Trp1104. Residues Pro1094–Trp1104 are compositionally biased toward polar residues.

Belongs to the nitrite and sulfite reductase 4Fe-4S domain family. Homodimer. Siroheme serves as cofactor. It depends on [4Fe-4S] cluster as a cofactor. FAD is required as a cofactor. Requires [2Fe-2S] cluster as cofactor.

It carries out the reaction NH4(+) + 3 NADP(+) + 2 H2O = nitrite + 3 NADPH + 5 H(+). It catalyses the reaction NH4(+) + 3 NAD(+) + 2 H2O = nitrite + 3 NADH + 5 H(+). Its pathway is nitrogen metabolism; nitrate reduction (assimilation). The chain is Nitrite reductase [NAD(P)H] (niiA) from Emericella nidulans (strain FGSC A4 / ATCC 38163 / CBS 112.46 / NRRL 194 / M139) (Aspergillus nidulans).